A 305-amino-acid polypeptide reads, in one-letter code: MTAEKPGLHPRNRHRSRYDMNALCQSCPQLQAFIVQTPAGEPSVNFADPLAVKALNKALLAHFYGVTQWDIPEGFLCPPVPGRADYVHHLADLLAEDNAGTIPPQATVLDIGTGANLIYPLIGVAEYGWRFTGSETGKDAYASAQAIVNGNEGLTRAIRLRRQKEASDIFNGIIHKNESYDATMCNPPFHDSAETARAGSERKRRNLGQAEDGALNFGGQQHELWCEGGEVAFIEKMIAESKLFARQVKWFTTLVSRGDNLPPLYRALTAVGAVKVVKKEMAQGQKQSRFIAWTFMDDAKRRKSF.

The protein belongs to the methyltransferase superfamily. METTL16/RlmF family.

It localises to the cytoplasm. It carries out the reaction adenosine(1618) in 23S rRNA + S-adenosyl-L-methionine = N(6)-methyladenosine(1618) in 23S rRNA + S-adenosyl-L-homocysteine + H(+). Functionally, specifically methylates the adenine in position 1618 of 23S rRNA. The protein is Ribosomal RNA large subunit methyltransferase F of Enterobacter sp. (strain 638).